A 1574-amino-acid chain; its full sequence is Pentafunctional AROM polypeptide (1574 aa).

The 3-dehydroquinate synthase stretch occupies residues Met1–Asp384. NAD(+)-binding positions include Asp49–Asn51, Glu85–Lys88, Gly116–Val118, and Asp121. Position 132 (Arg132) interacts with 7-phospho-2-dehydro-3-deoxy-D-arabino-heptonate. An NAD(+)-binding site is contributed by Thr141 to Thr142. 7-phospho-2-dehydro-3-deoxy-D-arabino-heptonate contacts are provided by Asp148 and Lys154. Lys163 contributes to the NAD(+) binding site. Asn164 is a binding site for 7-phospho-2-dehydro-3-deoxy-D-arabino-heptonate. Residues Phe181–Thr184 and Asn192 each bind NAD(+). Zn(2+) is bound at residue Glu196. 7-phospho-2-dehydro-3-deoxy-D-arabino-heptonate is bound by residues Glu196–Lys199 and Lys250. The Proton acceptor; for 3-dehydroquinate synthase activity role is filled by Glu260. Residues Arg264–Asn268 and His271 each bind 7-phospho-2-dehydro-3-deoxy-D-arabino-heptonate. His271 lines the Zn(2+) pocket. Residue His275 is the Proton acceptor; for 3-dehydroquinate synthase activity of the active site. The 7-phospho-2-dehydro-3-deoxy-D-arabino-heptonate site is built by His287 and Lys356. Position 287 (His287) interacts with Zn(2+). Residues Ile397–Leu837 are EPSP synthase. The active-site For EPSP synthase activity is Cys819. Positions Thr858–Ser1052 are shikimate kinase. Residue Gly865–Thr872 coordinates ATP. Residues Leu1053–Glu1266 form a 3-dehydroquinase region. His1169 (proton acceptor; for 3-dehydroquinate dehydratase activity) is an active-site residue. The active-site Schiff-base intermediate with substrate; for 3-dehydroquinate dehydratase activity is Lys1197. Residues Ala1279–Asp1574 are shikimate dehydrogenase.

It in the N-terminal section; belongs to the sugar phosphate cyclases superfamily. Dehydroquinate synthase family. The protein in the 2nd section; belongs to the EPSP synthase family. In the 3rd section; belongs to the shikimate kinase family. This sequence in the 4th section; belongs to the type-I 3-dehydroquinase family. It in the C-terminal section; belongs to the shikimate dehydrogenase family. As to quaternary structure, homodimer. Zn(2+) is required as a cofactor.

It localises to the cytoplasm. The enzyme catalyses 7-phospho-2-dehydro-3-deoxy-D-arabino-heptonate = 3-dehydroquinate + phosphate. It carries out the reaction 3-dehydroquinate = 3-dehydroshikimate + H2O. The catalysed reaction is shikimate + NADP(+) = 3-dehydroshikimate + NADPH + H(+). It catalyses the reaction shikimate + ATP = 3-phosphoshikimate + ADP + H(+). The enzyme catalyses 3-phosphoshikimate + phosphoenolpyruvate = 5-O-(1-carboxyvinyl)-3-phosphoshikimate + phosphate. It functions in the pathway metabolic intermediate biosynthesis; chorismate biosynthesis; chorismate from D-erythrose 4-phosphate and phosphoenolpyruvate: step 2/7. It participates in metabolic intermediate biosynthesis; chorismate biosynthesis; chorismate from D-erythrose 4-phosphate and phosphoenolpyruvate: step 3/7. The protein operates within metabolic intermediate biosynthesis; chorismate biosynthesis; chorismate from D-erythrose 4-phosphate and phosphoenolpyruvate: step 4/7. Its pathway is metabolic intermediate biosynthesis; chorismate biosynthesis; chorismate from D-erythrose 4-phosphate and phosphoenolpyruvate: step 5/7. It functions in the pathway metabolic intermediate biosynthesis; chorismate biosynthesis; chorismate from D-erythrose 4-phosphate and phosphoenolpyruvate: step 6/7. In terms of biological role, the AROM polypeptide catalyzes 5 consecutive enzymatic reactions in prechorismate polyaromatic amino acid biosynthesis. This Verticillium alfalfae (strain VaMs.102 / ATCC MYA-4576 / FGSC 10136) (Verticillium wilt of alfalfa) protein is Pentafunctional AROM polypeptide.